The primary structure comprises 129 residues: Protein UL131A (129 aa).

Positions 1–18 (MRLCRVWLSVCLCAVVLG) are cleaved as a signal peptide.

Forms the envelope pentamer complex (PC) composed of gH, gL, UL128, UL130, and UL131A. The pentamer interacts with host NRP2. The interaction with gH is important for the formation of UL128, UL130, gH-gL complex.

The protein localises to the virion membrane. In terms of biological role, plays a role in viral entry into host cells. Forms a pentameric complex at the surface of the viral envelope together with gH, gL, UL130 and UL131. This complex is required for entry in epithelial, endothelial and myeloid host cells. Mechanistically, engages host receptor(s) including neurophilin 2/NRP2 to mediate infection. Contributes to the formation of the complex between UL128, UL130 and gH-gL. In Human cytomegalovirus (strain Merlin) (HHV-5), this protein is Protein UL131A (UL131A).